A 124-amino-acid chain; its full sequence is MRHYEVVFIVHPDQSEQVPAMVERYQSLVTGQNGAVHRLEDWGRRQLAYPIQKLVKAHYVCMNIECNQATLDELEHSFRYNDAVLRHLVIKTKKAPVGASIMMKSVEREEARKASAEAAAVQAE.

This sequence belongs to the bacterial ribosomal protein bS6 family.

Binds together with bS18 to 16S ribosomal RNA. This Bordetella avium (strain 197N) protein is Small ribosomal subunit protein bS6.